Reading from the N-terminus, the 161-residue chain is 6,7-dimethyl-8-ribityllumazine synthase (161 aa).

5-amino-6-(D-ribitylamino)uracil-binding positions include Trp-25, 57 to 59 (AFE), and 80 to 82 (VVI). A (2S)-2-hydroxy-3-oxobutyl phosphate-binding site is contributed by 85 to 86 (GT). The active-site Proton donor is the His-88. Position 113 (Phe-113) interacts with 5-amino-6-(D-ribitylamino)uracil. Residue Arg-127 participates in (2S)-2-hydroxy-3-oxobutyl phosphate binding.

Belongs to the DMRL synthase family.

It carries out the reaction (2S)-2-hydroxy-3-oxobutyl phosphate + 5-amino-6-(D-ribitylamino)uracil = 6,7-dimethyl-8-(1-D-ribityl)lumazine + phosphate + 2 H2O + H(+). The protein operates within cofactor biosynthesis; riboflavin biosynthesis; riboflavin from 2-hydroxy-3-oxobutyl phosphate and 5-amino-6-(D-ribitylamino)uracil: step 1/2. Functionally, catalyzes the formation of 6,7-dimethyl-8-ribityllumazine by condensation of 5-amino-6-(D-ribitylamino)uracil with 3,4-dihydroxy-2-butanone 4-phosphate. This is the penultimate step in the biosynthesis of riboflavin. The chain is 6,7-dimethyl-8-ribityllumazine synthase from Kineococcus radiotolerans (strain ATCC BAA-149 / DSM 14245 / SRS30216).